The chain runs to 351 residues: MDDKKAANNSEKSKALAAALAQIEKQFGKGSVMRMEDGVIAEEIQAVSTGSLGLDIALGIGGLPRGRVIEIYGPESSGKTTLTLQSIAEMQKLGGTCAFIDAEHALDVTYAQKLGVNLNDLLISQPDTGEQALEICDALVRSGAVDLIVVDSVAALTPKAEIEGDMGDSLPGLQARLMSQALRKLTGSINRTNTTVIFINQIRMKIGVMFGNPETTTGGNALKFYASVRLDIRRTGSIKSGDEVIGSETKVKVVKNKVAPPFREAHFDILYGEGTSREGEILDLGSEHKVVEKSGAWYSYNGERIGQGKDNARNYLKEHPELAREIENKVRVALGVPELAGGEAEAEAKAS.

An ATP-binding site is contributed by 73-80 (GPESSGKT).

It belongs to the RecA family.

It is found in the cytoplasm. Functionally, can catalyze the hydrolysis of ATP in the presence of single-stranded DNA, the ATP-dependent uptake of single-stranded DNA by duplex DNA, and the ATP-dependent hybridization of homologous single-stranded DNAs. It interacts with LexA causing its activation and leading to its autocatalytic cleavage. The sequence is that of Protein RecA from Herbaspirillum seropedicae.